Consider the following 356-residue polypeptide: MRFSSSFLSVLALASQALAFPLNDLPTTDSGLEVKLTSVGNTRMKAVLTNTADHDLSFLKFNTFFDDAPTQKVRIAKDGSLVPFNGIHRYYNIDDLPQEAFIPLAPGESVEAEFDIAETSDLSAGGSYKIFASGVIPIVAGPGIKVTSAVSFSTDEMTVDVDGAEAAQVQSALPEATLDKRTRIDRNTCTGNYYNALARALQTAAGYASRAAQAAQAGNRFQEFFKTTSPQVRQNVAARFSAIAQECRSPSGGRTTYHCQDVYRACQQGIIAYTIPARSAVVNCPPYWRLPAVVNQGFAPDMGYVVVHEFAHAPSIFRPGTVDHAYGYAQCVRLNSQQALSNADNYALFAAAASRR.

A signal peptide spans 1–19 (MRFSSSFLSVLALASQALA). Residues 20 to 181 (FPLNDLPTTD…ALPEATLDKR (162 aa)) constitute a propeptide that is removed on maturation. Cystine bridges form between cysteine 189–cysteine 259 and cysteine 266–cysteine 284. Histidine 308 lines the Zn(2+) pocket. The active site involves glutamate 309. Histidine 312 and aspartate 323 together coordinate Zn(2+).

This sequence belongs to the peptidase M35 family. Requires Zn(2+) as cofactor.

The protein localises to the secreted. The catalysed reaction is Preferential cleavage of bonds with hydrophobic residues in P1'. Also 3-Asn-|-Gln-4 and 8-Gly-|-Ser-9 bonds in insulin B chain.. Its function is as follows. Secreted metalloproteinase that allows assimilation of proteinaceous substrates. Shows high activities on basic nuclear substrates such as histone and protamine. The sequence is that of Neutral protease 2 homolog UREG_03761 from Uncinocarpus reesii (strain UAMH 1704).